The sequence spans 561 residues: DNA ligase B (561 aa).

Residue Lys-125 is the N6-AMP-lysine intermediate of the active site.

Belongs to the NAD-dependent DNA ligase family. LigB subfamily.

It carries out the reaction NAD(+) + (deoxyribonucleotide)n-3'-hydroxyl + 5'-phospho-(deoxyribonucleotide)m = (deoxyribonucleotide)n+m + AMP + beta-nicotinamide D-nucleotide.. Catalyzes the formation of phosphodiester linkages between 5'-phosphoryl and 3'-hydroxyl groups in double-stranded DNA using NAD as a coenzyme and as the energy source for the reaction. This Salmonella dublin (strain CT_02021853) protein is DNA ligase B.